A 268-amino-acid polypeptide reads, in one-letter code: Phosphatidylglycerol--prolipoprotein diacylglyceryl transferase (268 aa).

The next 7 membrane-spanning stretches (helical) occupy residues 27-47 (PALRWYGFTYLVGFVAAMWLL), 66-86 (LLFYGFLGVILGGRIGYVLFY), 104-124 (GGMSFHGGLIGVITAMIYITW), 130-150 (FFAVADMVAPVVPIGLGAGRI), 181-201 (PSQLYQFALEGVALFLLLYWF), 208-228 (VGAVSGMFLLGYGIFRVIVET), and 242-262 (LMTMGQILSVPMILFGLYLIL). Arg-149 provides a ligand contact to a 1,2-diacyl-sn-glycero-3-phospho-(1'-sn-glycerol).

Belongs to the Lgt family.

It is found in the cell inner membrane. The enzyme catalyses L-cysteinyl-[prolipoprotein] + a 1,2-diacyl-sn-glycero-3-phospho-(1'-sn-glycerol) = an S-1,2-diacyl-sn-glyceryl-L-cysteinyl-[prolipoprotein] + sn-glycerol 1-phosphate + H(+). The protein operates within protein modification; lipoprotein biosynthesis (diacylglyceryl transfer). Catalyzes the transfer of the diacylglyceryl group from phosphatidylglycerol to the sulfhydryl group of the N-terminal cysteine of a prolipoprotein, the first step in the formation of mature lipoproteins. This Shewanella oneidensis (strain ATCC 700550 / JCM 31522 / CIP 106686 / LMG 19005 / NCIMB 14063 / MR-1) protein is Phosphatidylglycerol--prolipoprotein diacylglyceryl transferase.